Reading from the N-terminus, the 273-residue chain is MKKYLLGIGLILALIACKQNVSSLDEKNSVSVDLPGEMKVLVSKEKNKDGKYDLIATVDKLELKGTSDKNNGSGVLEGVKADKSKVKLTISDDLGQTTLEVFKEDGKTLVSKKVTSKDKSSTEEKFNEKGEVSEKIITRADGTRLEYTGIKSDGSGKAKEVLKGYVLEGTLTAEKTTLVVKEGTVTLSKNISKSGEVSVELNDTDSSAATKKTAAWNSGTSTLTITVNSKKTKDLVFTKENTITVQQYDSNGTKLEGSAVEITKLDEIKNALK.

Positions 1–16 are cleaved as a signal peptide; it reads MKKYLLGIGLILALIA. Residue C17 is the site of N-palmitoyl cysteine attachment. C17 is lipidated: S-diacylglycerol cysteine.

The protein belongs to the OspA lipoprotein family.

The protein localises to the cell outer membrane. The protein resides in the cell surface. In terms of biological role, induces host (human and mouse) cytokine release by monocyte cell lines via TLR2 and CD14; nonlipidated protein does not stimulate host cells. This Borreliella burgdorferi (strain ATCC 35210 / DSM 4680 / CIP 102532 / B31) (Borrelia burgdorferi) protein is Outer surface protein A.